We begin with the raw amino-acid sequence, 464 residues long: Glutamate--tRNA ligase (464 aa).

A 'HIGH' region motif is present at residues 10–20; it reads PSPTGYLHIGG. The span at 113–130 shows a compositional bias: basic and acidic residues; it reads QEAKKEKPRYDGRWRPEA. The interval 113–142 is disordered; that stretch reads QEAKKEKPRYDGRWRPEAGKALPVPPTDVP. Residues 242–246 carry the 'KMSKS' region motif; that stretch reads KLSKR. Position 245 (lysine 245) interacts with ATP.

Belongs to the class-I aminoacyl-tRNA synthetase family. Glutamate--tRNA ligase type 1 subfamily. In terms of assembly, monomer.

The protein resides in the cytoplasm. It carries out the reaction tRNA(Glu) + L-glutamate + ATP = L-glutamyl-tRNA(Glu) + AMP + diphosphate. Its function is as follows. Catalyzes the attachment of glutamate to tRNA(Glu) in a two-step reaction: glutamate is first activated by ATP to form Glu-AMP and then transferred to the acceptor end of tRNA(Glu). The protein is Glutamate--tRNA ligase of Dechloromonas aromatica (strain RCB).